We begin with the raw amino-acid sequence, 294 residues long: Methionine aminopeptidase (294 aa).

Histidine 65 is a binding site for substrate. A divalent metal cation contacts are provided by aspartate 85, aspartate 96, and histidine 156. Residue histidine 164 coordinates substrate. A divalent metal cation-binding residues include glutamate 189 and glutamate 279.

The protein belongs to the peptidase M24A family. Methionine aminopeptidase archaeal type 2 subfamily. As to quaternary structure, monomer. Requires Co(2+) as cofactor. It depends on Zn(2+) as a cofactor. Mn(2+) serves as cofactor. Fe(2+) is required as a cofactor.

It carries out the reaction Release of N-terminal amino acids, preferentially methionine, from peptides and arylamides.. Functionally, removes the N-terminal methionine from nascent proteins. The N-terminal methionine is often cleaved when the second residue in the primary sequence is small and uncharged (Met-Ala-, Cys, Gly, Pro, Ser, Thr, or Val). This chain is Methionine aminopeptidase, found in Methanocaldococcus jannaschii (strain ATCC 43067 / DSM 2661 / JAL-1 / JCM 10045 / NBRC 100440) (Methanococcus jannaschii).